The sequence spans 467 residues: Uronate isomerase (467 aa).

It belongs to the metallo-dependent hydrolases superfamily. Uronate isomerase family.

It carries out the reaction D-glucuronate = D-fructuronate. The enzyme catalyses aldehydo-D-galacturonate = keto-D-tagaturonate. The protein operates within carbohydrate metabolism; pentose and glucuronate interconversion. In Histophilus somni (strain 2336) (Haemophilus somnus), this protein is Uronate isomerase.